Here is a 472-residue protein sequence, read N- to C-terminus: MSGTVMQIVRVAILADSRLTEMALPAELPLREILPAVQRLVVPSAQNGDGGQADSGAAVQLSLAPVGGQPFSLDASLDTVGVVDGDLLVLQPVPAGPAAPGIVEDIADAAMIFSTSRLKPWGIAHIQRGALAAVIAVALLATGLTVTYRVATGVLAGLLAVAGIAVASALAGLLITIRSPRSGIALSIAALVPIGAALALAVPGKFGPAQVLLGAAGVAAWSLIALMIPSAERERVVAFFTAAAVVGASVALAAGAQLLWQLPLLSIGCGLIVAALLVTIQAAQLSALWARFPLPVIPAPGDPTPSAPPLRLLEDLPRRVRVSDAHQSGFIAAAVLLSVLGSVAIAVRPEALSVVGWYLVAATAAAATLRARVWDSAACKAWLLAQPYLVAGVLLVFYTATGRYVAAFGAVLVLAVLMLAWVVVALNPGIASPESYSLPLRRLLGLVAAGLDVSLIPVMAYLVGLFAWVLNR.

Helical transmembrane passes span 121–141 (WGIA…ALLA), 155–175 (LAGL…GLLI), 183–203 (GIAL…LAVP), 211–231 (VLLG…IPSA), 236–256 (VVAF…AAGA), 258–278 (LLWQ…ALLV), 327–347 (QSGF…AIAV), 349–369 (PEAL…AATL), 381–401 (AWLL…YTAT), 405–425 (VAAF…VVVA), and 450–470 (GLDV…AWVL).

The protein belongs to the EccD/Snm4 family. Part of the ESX-3 / type VII secretion system (T7SS), which is composed of cytosolic and membrane components. The ESX-3 membrane complex is composed of EccB3, EccC3, EccD3 and EccE3.

The protein resides in the cell inner membrane. Its function is as follows. Part of the ESX-3 specialized secretion system, which is important for iron and zinc uptake or homeostasis. The sequence is that of ESX-3 secretion system protein EccD3 from Mycobacterium tuberculosis (strain CDC 1551 / Oshkosh).